A 201-amino-acid chain; its full sequence is Imidazole glycerol phosphate synthase subunit HisH (201 aa).

Residues 1-201 (MVFIADYGAG…LQVLKNFAEF (201 aa)) form the Glutamine amidotransferase type-1 domain. Cys-79 acts as the Nucleophile in catalysis. Catalysis depends on residues His-183 and Glu-185.

In terms of assembly, heterodimer of HisH and HisF.

Its subcellular location is the cytoplasm. The enzyme catalyses 5-[(5-phospho-1-deoxy-D-ribulos-1-ylimino)methylamino]-1-(5-phospho-beta-D-ribosyl)imidazole-4-carboxamide + L-glutamine = D-erythro-1-(imidazol-4-yl)glycerol 3-phosphate + 5-amino-1-(5-phospho-beta-D-ribosyl)imidazole-4-carboxamide + L-glutamate + H(+). It catalyses the reaction L-glutamine + H2O = L-glutamate + NH4(+). Its pathway is amino-acid biosynthesis; L-histidine biosynthesis; L-histidine from 5-phospho-alpha-D-ribose 1-diphosphate: step 5/9. In terms of biological role, IGPS catalyzes the conversion of PRFAR and glutamine to IGP, AICAR and glutamate. The HisH subunit catalyzes the hydrolysis of glutamine to glutamate and ammonia as part of the synthesis of IGP and AICAR. The resulting ammonia molecule is channeled to the active site of HisF. In Chlorobaculum tepidum (strain ATCC 49652 / DSM 12025 / NBRC 103806 / TLS) (Chlorobium tepidum), this protein is Imidazole glycerol phosphate synthase subunit HisH.